The following is a 353-amino-acid chain: Heat-inducible transcription repressor HrcA (353 aa).

This sequence belongs to the HrcA family.

Functionally, negative regulator of class I heat shock genes (grpE-dnaK-dnaJ and groELS operons). Prevents heat-shock induction of these operons. The chain is Heat-inducible transcription repressor HrcA from Anaeromyxobacter dehalogenans (strain 2CP-1 / ATCC BAA-258).